The primary structure comprises 300 residues: MQTDLSNSSLFNHKSVMTDEILYSIDQYPFISDNKLTAIDATLGGGGHSYQLLKKYPDLKIIGLDHDPIARESALNKLEEFKSRIEIIPSNFSNFEPKEKVSFVIADLGVNSNQIDSPERGFSFQKDGPLDMRMNPLIKMNAENLIETLSEKDLADLIFKFGDERLSRKISRKIKKDLKEKGKYSGTKDLAYSIAGCFPPKQRYRKIHPATRTFQALRIAVNNEIEALEKFLKIAPDWLLTGGIISIISFHSIEDRLVKNSFKGDYRLKNLTKKPITPNKKEIENNKRSRSAKLRIAQLK.

Residues 46 to 48 (GGH), aspartate 65, phenylalanine 92, aspartate 107, and glutamine 114 each bind S-adenosyl-L-methionine.

The protein belongs to the methyltransferase superfamily. RsmH family.

The protein localises to the cytoplasm. It catalyses the reaction cytidine(1402) in 16S rRNA + S-adenosyl-L-methionine = N(4)-methylcytidine(1402) in 16S rRNA + S-adenosyl-L-homocysteine + H(+). In terms of biological role, specifically methylates the N4 position of cytidine in position 1402 (C1402) of 16S rRNA. The chain is Ribosomal RNA small subunit methyltransferase H from Prochlorococcus marinus (strain MIT 9515).